We begin with the raw amino-acid sequence, 492 residues long: Cysteine--tRNA ligase (492 aa).

Residue Cys27 coordinates Zn(2+). Residues 29–39 (VTVYDLCHLGH) carry the 'HIGH' region motif. Residues Cys211, His236, and Glu240 each contribute to the Zn(2+) site. The short motif at 268 to 272 (KMSKS) is the 'KMSKS' region element. Position 271 (Lys271) interacts with ATP.

Belongs to the class-I aminoacyl-tRNA synthetase family. Monomer. Zn(2+) is required as a cofactor.

The protein resides in the cytoplasm. It carries out the reaction tRNA(Cys) + L-cysteine + ATP = L-cysteinyl-tRNA(Cys) + AMP + diphosphate. This Prochlorococcus marinus subsp. pastoris (strain CCMP1986 / NIES-2087 / MED4) protein is Cysteine--tRNA ligase.